Consider the following 131-residue polypeptide: Profilin-5 (131 aa).

It belongs to the profilin family. In terms of assembly, occurs in many kinds of cells as a complex with monomeric actin in a 1:1 ratio.

The protein resides in the cytoplasm. It localises to the cytoskeleton. In terms of biological role, binds to actin and affects the structure of the cytoskeleton. At high concentrations, profilin prevents the polymerization of actin, whereas it enhances it at low concentrations. By binding to PIP2, it inhibits the formation of IP3 and DG. The protein is Profilin-5 of Hevea brasiliensis (Para rubber tree).